A 301-amino-acid chain; its full sequence is Homoserine O-acetyltransferase (301 aa).

Residue C142 is the Acyl-thioester intermediate of the active site. Residues K163 and S192 each contribute to the substrate site. The Proton acceptor role is filled by H235. The active site involves E237. R249 contacts substrate.

The protein belongs to the MetA family.

The protein localises to the cytoplasm. It carries out the reaction L-homoserine + acetyl-CoA = O-acetyl-L-homoserine + CoA. It functions in the pathway amino-acid biosynthesis; L-methionine biosynthesis via de novo pathway; O-acetyl-L-homoserine from L-homoserine: step 1/1. Transfers an acetyl group from acetyl-CoA to L-homoserine, forming acetyl-L-homoserine. The chain is Homoserine O-acetyltransferase from Bacillus mycoides (strain KBAB4) (Bacillus weihenstephanensis).